Consider the following 266-residue polypeptide: Small ribosomal subunit protein uS2 (266 aa).

The tract at residues 247-266 (EGENNYSNNRSWNKPERTNN) is disordered. Positions 249 to 258 (ENNYSNNRSW) are enriched in polar residues.

This sequence belongs to the universal ribosomal protein uS2 family.

The sequence is that of Small ribosomal subunit protein uS2 from Mesoplasma florum (strain ATCC 33453 / NBRC 100688 / NCTC 11704 / L1) (Acholeplasma florum).